A 673-amino-acid chain; its full sequence is Putative potassium transport system protein Kup 1 (673 aa).

13 helical membrane-spanning segments follow: residues 14–34, 58–78, 101–121, 147–167, 175–195, 196–216, 220–240, 252–272, 294–314, 345–365, 374–394, 403–423, and 427–447; these read GAGF…SPLY, LSLI…WIAL, WLII…ALTP, LPIV…QRFG, FGPV…INLF, GDFS…LLSP, AGIF…ALYS, VSWP…AAWL, LIIF…QALI, LYIP…VVYF, AYGL…TVYL, VFVV…FAAS, and FLHG…VMAI.

It belongs to the HAK/KUP transporter (TC 2.A.72) family.

The protein resides in the cell membrane. The catalysed reaction is K(+)(in) + H(+)(in) = K(+)(out) + H(+)(out). Functionally, transport of potassium into the cell. Likely operates as a K(+):H(+) symporter. The polypeptide is Putative potassium transport system protein Kup 1 (Lactococcus lactis subsp. cremoris (strain MG1363)).